A 441-amino-acid chain; its full sequence is Tryptophan aminotransferase-related protein 1 (441 aa).

Pyridoxal 5'-phosphate-binding positions include Tyr-110, 152 to 153 (ST), Asn-219, 239 to 242 (DLAY), 262 to 265 (TVSK), and Arg-273. An N6-(pyridoxal phosphate)lysine modification is found at Lys-265.

The protein belongs to the alliinase family. The cofactor is pyridoxal 5'-phosphate. As to expression, highly expressed in anthers. Expressed at low levels in ovaries.

The catalysed reaction is L-tryptophan + 2-oxoglutarate = indole-3-pyruvate + L-glutamate. It participates in plant hormone metabolism; auxin biosynthesis. Its function is as follows. Probable tryptophan aminotransferase that may be involved in the regulation of auxin production in developing rice grains. The protein is Tryptophan aminotransferase-related protein 1 of Oryza sativa subsp. japonica (Rice).